We begin with the raw amino-acid sequence, 308 residues long: Aspartate carbamoyltransferase catalytic subunit (308 aa).

Carbamoyl phosphate contacts are provided by Arg55 and Thr56. Lys83 contributes to the L-aspartate binding site. Arg105, His133, and Gln136 together coordinate carbamoyl phosphate. The L-aspartate site is built by Arg166 and Arg223. Carbamoyl phosphate contacts are provided by Gly264 and Pro265.

Belongs to the aspartate/ornithine carbamoyltransferase superfamily. ATCase family. As to quaternary structure, heterododecamer (2C3:3R2) of six catalytic PyrB chains organized as two trimers (C3), and six regulatory PyrI chains organized as three dimers (R2).

It carries out the reaction carbamoyl phosphate + L-aspartate = N-carbamoyl-L-aspartate + phosphate + H(+). It functions in the pathway pyrimidine metabolism; UMP biosynthesis via de novo pathway; (S)-dihydroorotate from bicarbonate: step 2/3. Catalyzes the condensation of carbamoyl phosphate and aspartate to form carbamoyl aspartate and inorganic phosphate, the committed step in the de novo pyrimidine nucleotide biosynthesis pathway. The chain is Aspartate carbamoyltransferase catalytic subunit from Salinispora arenicola (strain CNS-205).